Reading from the N-terminus, the 290-residue chain is Bifunctional protein FolD (290 aa).

Residues 166–168 (GAS) and isoleucine 232 contribute to the NADP(+) site.

Belongs to the tetrahydrofolate dehydrogenase/cyclohydrolase family. In terms of assembly, homodimer.

The catalysed reaction is (6R)-5,10-methylene-5,6,7,8-tetrahydrofolate + NADP(+) = (6R)-5,10-methenyltetrahydrofolate + NADPH. It carries out the reaction (6R)-5,10-methenyltetrahydrofolate + H2O = (6R)-10-formyltetrahydrofolate + H(+). Its pathway is one-carbon metabolism; tetrahydrofolate interconversion. In terms of biological role, catalyzes the oxidation of 5,10-methylenetetrahydrofolate to 5,10-methenyltetrahydrofolate and then the hydrolysis of 5,10-methenyltetrahydrofolate to 10-formyltetrahydrofolate. This is Bifunctional protein FolD from Proteus mirabilis (strain HI4320).